Reading from the N-terminus, the 71-residue chain is Disintegrin applaggin (71 aa).

The 71-residue stretch at glutamate 1–histidine 71 folds into the Disintegrin domain. 6 disulfide bridges follow: cysteine 6–cysteine 21, cysteine 8–cysteine 16, cysteine 15–cysteine 38, cysteine 29–cysteine 35, cysteine 34–cysteine 58, and cysteine 47–cysteine 65. The Cell attachment site motif lies at arginine 50–aspartate 52.

The protein belongs to the venom metalloproteinase (M12B) family. P-II subfamily. P-IIa sub-subfamily. In terms of assembly, monomer (disintegrin). Expressed by the venom gland.

Its subcellular location is the secreted. In terms of biological role, inhibits fibrinogen interaction with platelets. Acts by binding to alpha-IIb/beta-3 (ITGA2B/ITGB3) on the platelet surface and inhibits aggregation induced by ADP, thrombin, platelet-activating factor and collagen. The polypeptide is Disintegrin applaggin (Agkistrodon piscivorus piscivorus (Eastern cottonmouth)).